The primary structure comprises 336 residues: Nicotinate-nucleotide--dimethylbenzimidazole phosphoribosyltransferase (336 aa).

Glu-304 (proton acceptor) is an active-site residue.

It belongs to the CobT family.

It carries out the reaction 5,6-dimethylbenzimidazole + nicotinate beta-D-ribonucleotide = alpha-ribazole 5'-phosphate + nicotinate + H(+). It functions in the pathway nucleoside biosynthesis; alpha-ribazole biosynthesis; alpha-ribazole from 5,6-dimethylbenzimidazole: step 1/2. Functionally, catalyzes the synthesis of alpha-ribazole-5'-phosphate from nicotinate mononucleotide (NAMN) and 5,6-dimethylbenzimidazole (DMB). The protein is Nicotinate-nucleotide--dimethylbenzimidazole phosphoribosyltransferase of Ruegeria sp. (strain TM1040) (Silicibacter sp.).